Here is a 426-residue protein sequence, read N- to C-terminus: Riboflavin biosynthesis protein PYRD, chloroplastic (426 aa).

The N-terminal 61 residues, 1 to 61 (MQISCLPISI…SQTGFSNPVL (61 aa)), are a transit peptide targeting the chloroplast. The CMP/dCMP-type deaminase domain occupies 72–194 (VDDSFYMRKC…RLKDAGIDVT (123 aa)). Histidine 121 is a Zn(2+) binding site. Residue glutamate 123 is the Proton donor of the active site. Positions 146 and 155 each coordinate Zn(2+).

It depends on Zn(2+) as a cofactor.

The protein localises to the plastid. The protein resides in the chloroplast. The enzyme catalyses 2,5-diamino-6-hydroxy-4-(5-phosphoribosylamino)-pyrimidine + H2O + H(+) = 5-amino-6-(5-phospho-D-ribosylamino)uracil + NH4(+). It functions in the pathway cofactor biosynthesis; riboflavin biosynthesis; 5-amino-6-(D-ribitylamino)uracil from GTP: step 2/4. Its function is as follows. Monofunctional pyrimidine deaminase involved in the riboflavin biosynthesis pathway. Also has a reductase domain that lacks catalytically essential substrate-binding residues. This Arabidopsis thaliana (Mouse-ear cress) protein is Riboflavin biosynthesis protein PYRD, chloroplastic (PYRD).